The sequence spans 63 residues: Large ribosomal subunit protein bL33m (63 aa).

This sequence belongs to the bacterial ribosomal protein bL33 family.

The protein resides in the mitochondrion. In Dictyostelium discoideum (Social amoeba), this protein is Large ribosomal subunit protein bL33m (mrpl33).